Here is an 83-residue protein sequence, read N- to C-terminus: Sulfur carrier protein TusA (83 aa).

Residue C20 is the Cysteine persulfide intermediate of the active site.

The protein belongs to the sulfur carrier protein TusA family.

Its subcellular location is the cytoplasm. Its function is as follows. Sulfur carrier protein which probably makes part of a sulfur-relay system. In Pseudomonas fluorescens (strain SBW25), this protein is Sulfur carrier protein TusA.